The sequence spans 294 residues: Nucleotide-binding protein Dtur_1129 (294 aa).

ATP is bound at residue 10–17 (GLSGAGKS). 61 to 64 (DIRT) is a GTP binding site.

It belongs to the RapZ-like family.

Functionally, displays ATPase and GTPase activities. The chain is Nucleotide-binding protein Dtur_1129 from Dictyoglomus turgidum (strain DSM 6724 / Z-1310).